The primary structure comprises 126 residues: MSYKPIAPAPSSTPGSSTPGPGTPVPTGSVPSPSGSVPGAGAPFRPLFNDFGPPSMGYVQAMKPPGAQGSQSTYTDLLSVIEEMGKEIRPTYAGSKSAMERLKRGIIHARALVRECLAETERNART.

Positions 1–48 (MSYKPIAPAPSSTPGSSTPGPGTPVPTGSVPSPSGSVPGAGAPFRPLF) are disordered. Over residues 9 to 43 (APSSTPGSSTPGPGTPVPTGSVPSPSGSVPGAGAP) the composition is skewed to low complexity. Residues 64–106 (PPGAQGSQSTYTDLLSVIEEMGKEIRPTYAGSKSAMERLKRGI) are interaction with CDK2.

It belongs to the CDK2AP family. As to quaternary structure, component of the nucleosome remodeling and deacetylase (NuRD) repressor complex, composed of core proteins MTA1, MTA2, MTA3, RBBP4, RBBP7, HDAC1, HDAC2, MBD2, MBD3, and peripherally associated proteins CDK2AP1, CDK2AP2, GATAD2A, GATAD2B, CHD3, CHD4 and CHD5. The exact stoichiometry of the NuRD complex is unknown, and some subunits such as MBD2 and MBD3, GATAD2A and GATAD2B, and CHD3, CHD4 and CHD5 define mutually exclusive NuRD complexes. Interacts with CDK2AP1. Interacts with CDK2. Interacts with MAPK1. In terms of processing, phosphorylated by MAPK1 and CDK2. In terms of tissue distribution, ubiquitous.

It is found in the cytoplasm. It localises to the nucleus. In terms of biological role, acts as a component of the histone deacetylase NuRD complex which participates in the remodeling of chromatin. Inhibits cell cycle G1/S phase transition by repressing CDK2 expression and activation; represses CDK2 activation by inhibiting its interaction with cyclin E and A. Plays a role in regulating the self-renewal of embryonic stem cells (ESCs) and in maintaining cell survival during terminal differentiation of ESCs. Regulates microtubule organization of metaphase II oocytes. This chain is Cyclin-dependent kinase 2-associated protein 2 (CDK2AP2), found in Homo sapiens (Human).